We begin with the raw amino-acid sequence, 195 residues long: Iron-sulfur flavoprotein AF_1519 (195 aa).

Cys45, Cys48, Cys51, and Cys57 together coordinate [4Fe-4S] cluster.

The protein belongs to the SsuE family. Isf subfamily. Homodimer. The cofactor is FMN. [4Fe-4S] cluster serves as cofactor.

Functionally, redox-active protein probably involved in electron transport. The sequence is that of Iron-sulfur flavoprotein AF_1519 from Archaeoglobus fulgidus (strain ATCC 49558 / DSM 4304 / JCM 9628 / NBRC 100126 / VC-16).